Here is a 315-residue protein sequence, read N- to C-terminus: Glutathione synthetase (315 aa).

An ATP-grasp domain is found at 125–310 (KLFTAWFSDL…ITGMLMDAIE (186 aa)). N-beta-linked (GlcNAc) arginine glycosylation is present at Arg-256. Mg(2+) is bound by residues Glu-281 and Asn-283.

It belongs to the prokaryotic GSH synthase family. It depends on Mg(2+) as a cofactor. The cofactor is Mn(2+). Post-translationally, glycosylation at Arg-256 by NleB enhances the glutathione synthetase activity, leading to an increase in glutathione production. Glycosylation may promote C.rodentium survival in oxidative stress conditions.

The catalysed reaction is gamma-L-glutamyl-L-cysteine + glycine + ATP = glutathione + ADP + phosphate + H(+). Its pathway is sulfur metabolism; glutathione biosynthesis; glutathione from L-cysteine and L-glutamate: step 2/2. This is Glutathione synthetase from Citrobacter rodentium.